The following is a 278-amino-acid chain: 4-deoxy-L-threo-5-hexosulose-uronate ketol-isomerase (278 aa).

The Zn(2+) site is built by His196, His198, Glu203, and His245.

Belongs to the KduI family. Requires Zn(2+) as cofactor.

The enzyme catalyses 5-dehydro-4-deoxy-D-glucuronate = 3-deoxy-D-glycero-2,5-hexodiulosonate. It participates in glycan metabolism; pectin degradation; 2-dehydro-3-deoxy-D-gluconate from pectin: step 4/5. In terms of biological role, catalyzes the isomerization of 5-dehydro-4-deoxy-D-glucuronate to 3-deoxy-D-glycero-2,5-hexodiulosonate. In Pectobacterium carotovorum subsp. carotovorum (Erwinia carotovora subsp. carotovora), this protein is 4-deoxy-L-threo-5-hexosulose-uronate ketol-isomerase.